Reading from the N-terminus, the 430-residue chain is MVDSNDDQPERHALLHNDIQTSNNSRPSLVQKKYLPTPQDTRKSRASYTGSAMINPTSKQSRTGSGAQRTSRTAQKLKLLPEEPFQRDSERLTDLKNQEVYSQVNRIKDKPARRDAEKLGKAHRHLLPRSTAYCTASSYNMKELVRWLKDCRKLHHTHPKLFDECLYTPFIYNDWRGDKRFEDEDVIRLDDEGGEIIVSDKHPDLFIFEYGVVVMWGFTEREEKAFLNDIEKFEKEKLAEEDIQVEEFNYYVTKSYQPRIYNDFITLRDGSNYMVKLSISHAIAQSVKISLFEELVDNTIEDTQDIPQEIAYSGKVSMSKEDIMKSIGELFILRININLHGSVLDSPEIMWSEPQLEPIYQATRGYLEINQRVSLLNQRLEVISDLLQMLKEQLGHSHEEYLEFIVILLVGVEVLISVINIVVDMLASQH.

Positions 1-73 (MVDSNDDQPE…GSGAQRTSRT (73 aa)) are disordered. 2 stretches are compositionally biased toward polar residues: residues 18-28 (DIQTSNNSRPS) and 46-73 (ASYT…TSRT).

The protein belongs to the RMD1/sif2 family.

It is found in the cytoplasm. Required for sporulation where it is believed to have a role in meiotic nuclear division. The protein is Sporulation protein RMD1 (RMD1) of Saccharomyces cerevisiae (strain ATCC 204508 / S288c) (Baker's yeast).